A 265-amino-acid chain; its full sequence is S-adenosylmethionine decarboxylase proenzyme (265 aa).

Ser114 serves as the catalytic Schiff-base intermediate with substrate; via pyruvic acid. Ser114 bears the Pyruvic acid (Ser); by autocatalysis mark. Residue His119 is the Proton acceptor; for processing activity of the active site. The active-site Proton donor; for catalytic activity is Cys142.

It belongs to the prokaryotic AdoMetDC family. Type 2 subfamily. As to quaternary structure, heterooctamer of four alpha and four beta chains arranged as a tetramer of alpha/beta heterodimers. Pyruvate serves as cofactor. Is synthesized initially as an inactive proenzyme. Formation of the active enzyme involves a self-maturation process in which the active site pyruvoyl group is generated from an internal serine residue via an autocatalytic post-translational modification. Two non-identical subunits are generated from the proenzyme in this reaction, and the pyruvate is formed at the N-terminus of the alpha chain, which is derived from the carboxyl end of the proenzyme. The post-translation cleavage follows an unusual pathway, termed non-hydrolytic serinolysis, in which the side chain hydroxyl group of the serine supplies its oxygen atom to form the C-terminus of the beta chain, while the remainder of the serine residue undergoes an oxidative deamination to produce ammonia and the pyruvoyl group blocking the N-terminus of the alpha chain.

It carries out the reaction S-adenosyl-L-methionine + H(+) = S-adenosyl 3-(methylsulfanyl)propylamine + CO2. It functions in the pathway amine and polyamine biosynthesis; S-adenosylmethioninamine biosynthesis; S-adenosylmethioninamine from S-adenosyl-L-methionine: step 1/1. Functionally, catalyzes the decarboxylation of S-adenosylmethionine to S-adenosylmethioninamine (dcAdoMet), the propylamine donor required for the synthesis of the polyamines spermine and spermidine from the diamine putrescine. In Buchnera aphidicola subsp. Acyrthosiphon pisum (strain 5A), this protein is S-adenosylmethionine decarboxylase proenzyme.